The chain runs to 720 residues: 1,4-alpha-glucan branching enzyme GlgB 2 (720 aa).

Asp398 acts as the Nucleophile in catalysis. Residue Glu451 is the Proton donor of the active site.

Belongs to the glycosyl hydrolase 13 family. GlgB subfamily. As to quaternary structure, monomer.

The catalysed reaction is Transfers a segment of a (1-&gt;4)-alpha-D-glucan chain to a primary hydroxy group in a similar glucan chain.. It participates in glycan biosynthesis; glycogen biosynthesis. Its function is as follows. Catalyzes the formation of the alpha-1,6-glucosidic linkages in glycogen by scission of a 1,4-alpha-linked oligosaccharide from growing alpha-1,4-glucan chains and the subsequent attachment of the oligosaccharide to the alpha-1,6 position. In Xanthomonas oryzae pv. oryzae (strain KACC10331 / KXO85), this protein is 1,4-alpha-glucan branching enzyme GlgB 2.